The following is a 40-amino-acid chain: Photosystem II reaction center protein J (40 aa).

The helical transmembrane segment at 8 to 28 (IPLCLIGTVAGIAVIGLVGVF) threads the bilayer.

It belongs to the PsbJ family. In terms of assembly, PSII is composed of 1 copy each of membrane proteins PsbA, PsbB, PsbC, PsbD, PsbE, PsbF, PsbH, PsbI, PsbJ, PsbK, PsbL, PsbM, PsbT, PsbX, PsbY, PsbZ, Psb30/Ycf12, at least 3 peripheral proteins of the oxygen-evolving complex and a large number of cofactors. It forms dimeric complexes.

The protein localises to the plastid. It localises to the chloroplast thylakoid membrane. In terms of biological role, one of the components of the core complex of photosystem II (PSII). PSII is a light-driven water:plastoquinone oxidoreductase that uses light energy to abstract electrons from H(2)O, generating O(2) and a proton gradient subsequently used for ATP formation. It consists of a core antenna complex that captures photons, and an electron transfer chain that converts photonic excitation into a charge separation. The protein is Photosystem II reaction center protein J of Triticum aestivum (Wheat).